The sequence spans 322 residues: Tetrahydromethanopterin S-methyltransferase subunit H (322 aa).

Belongs to the MtrH family. In terms of assembly, the complex is composed of 8 subunits; MtrA, MtrB, MtrC, MtrD, MtrE, MtrF, MtrG and MtrH.

It carries out the reaction 5-methyl-5,6,7,8-tetrahydromethanopterin + coenzyme M + 2 Na(+)(in) = 5,6,7,8-tetrahydromethanopterin + methyl-coenzyme M + 2 Na(+)(out). Its pathway is one-carbon metabolism; methanogenesis from CO(2); methyl-coenzyme M from 5,10-methylene-5,6,7,8-tetrahydromethanopterin: step 2/2. Part of a complex that catalyzes the formation of methyl-coenzyme M and tetrahydromethanopterin from coenzyme M and methyl-tetrahydromethanopterin. This is an energy-conserving, sodium-ion translocating step. MtrH catalyzes the transfer of the methyl group from methyl-tetrahydromethanopterin to the corrinoid prosthetic group of MtrA. The polypeptide is Tetrahydromethanopterin S-methyltransferase subunit H (Methanopyrus kandleri (strain AV19 / DSM 6324 / JCM 9639 / NBRC 100938)).